The chain runs to 421 residues: E3 ubiquitin protein ligase DRIP1 (421 aa).

The RING-type zinc-finger motif lies at 16–57 (CSICDNILRDATTISECLHTFCRKCIYEKITEDEIETCPVCN). 2 stretches are compositionally biased toward polar residues: residues 106 to 121 (ISSLVVSTPMVSAQAG) and 157 to 172 (ESTSSPDTLNKFTQNK). Disordered regions lie at residues 106 to 198 (ISSL…WDSK) and 216 to 307 (PLKS…QERR). The span at 178 to 198 (SCKESISNKENKDGDEPWDSK) shows a compositional bias: basic and acidic residues. Positions 218–227 (KSSASQGSGS) are enriched in low complexity. Residues 244–253 (TKTKNKKRKC) are compositionally biased toward basic residues. The span at 262-271 (NGDPTTSETV) shows a compositional bias: polar residues. Residues 274–284 (KRMRTTQRKRS) are compositionally biased toward basic residues. The span at 285–294 (ATTLGDSRNL) shows a compositional bias: polar residues.

As to quaternary structure, interacts with DREB2A. Autoubiquitinated. As to expression, expressed in roots, leaves and flowers.

It localises to the nucleus. The catalysed reaction is S-ubiquitinyl-[E2 ubiquitin-conjugating enzyme]-L-cysteine + [acceptor protein]-L-lysine = [E2 ubiquitin-conjugating enzyme]-L-cysteine + N(6)-ubiquitinyl-[acceptor protein]-L-lysine.. It functions in the pathway protein modification; protein ubiquitination. Its function is as follows. E3 ubiquitin-protein ligase that acts as a negative regulator of the response to water stress. Mediates ubiquitination and subsequent proteasomal degradation of the drought-induced transcriptional activator DREB2A. Functionally redundant with DRIP2. The polypeptide is E3 ubiquitin protein ligase DRIP1 (DRIP1) (Arabidopsis thaliana (Mouse-ear cress)).